Consider the following 266-residue polypeptide: rRNA adenine N-6-methyltransferase (266 aa).

S-adenosyl-L-methionine contacts are provided by H14, T16, G41, E62, D87, and N103.

Belongs to the class I-like SAM-binding methyltransferase superfamily. rRNA adenine N(6)-methyltransferase family.

Involved in erythromycin resistance. The polypeptide is rRNA adenine N-6-methyltransferase (ermF) (Bacteroides fragilis).